Consider the following 178-residue polypeptide: ATP synthase subunit delta (178 aa).

It belongs to the ATPase delta chain family. As to quaternary structure, F-type ATPases have 2 components, F(1) - the catalytic core - and F(0) - the membrane proton channel. F(1) has five subunits: alpha(3), beta(3), gamma(1), delta(1), epsilon(1). F(0) has three main subunits: a(1), b(2) and c(10-14). The alpha and beta chains form an alternating ring which encloses part of the gamma chain. F(1) is attached to F(0) by a central stalk formed by the gamma and epsilon chains, while a peripheral stalk is formed by the delta and b chains.

The protein resides in the cell inner membrane. F(1)F(0) ATP synthase produces ATP from ADP in the presence of a proton or sodium gradient. F-type ATPases consist of two structural domains, F(1) containing the extramembraneous catalytic core and F(0) containing the membrane proton channel, linked together by a central stalk and a peripheral stalk. During catalysis, ATP synthesis in the catalytic domain of F(1) is coupled via a rotary mechanism of the central stalk subunits to proton translocation. Functionally, this protein is part of the stalk that links CF(0) to CF(1). It either transmits conformational changes from CF(0) to CF(1) or is implicated in proton conduction. In Pseudomonas entomophila (strain L48), this protein is ATP synthase subunit delta.